The following is a 432-amino-acid chain: Enolase (432 aa).

A (2R)-2-phosphoglycerate-binding site is contributed by Gln-166. Glu-210 serves as the catalytic Proton donor. Mg(2+) contacts are provided by Asp-247, Glu-288, and Asp-315. (2R)-2-phosphoglycerate is bound by residues Lys-340, Arg-369, Ser-370, and Lys-391. The active-site Proton acceptor is Lys-340.

This sequence belongs to the enolase family. The cofactor is Mg(2+).

The protein localises to the cytoplasm. The protein resides in the secreted. It localises to the cell surface. The enzyme catalyses (2R)-2-phosphoglycerate = phosphoenolpyruvate + H2O. Its pathway is carbohydrate degradation; glycolysis; pyruvate from D-glyceraldehyde 3-phosphate: step 4/5. In terms of biological role, catalyzes the reversible conversion of 2-phosphoglycerate (2-PG) into phosphoenolpyruvate (PEP). It is essential for the degradation of carbohydrates via glycolysis. The sequence is that of Enolase from Aeropyrum pernix (strain ATCC 700893 / DSM 11879 / JCM 9820 / NBRC 100138 / K1).